Reading from the N-terminus, the 146-residue chain is Hemoglobin subunit beta (146 aa).

Residues 2 to 146 (QWTAEEKQLI…VAHALARKYH (145 aa)) enclose the Globin domain. Residues H63 and H92 each coordinate heme b.

Belongs to the globin family. As to quaternary structure, heterotetramer of two alpha chains and two beta chains. As to expression, red blood cells.

Functionally, involved in oxygen transport from the lung to the various peripheral tissues. The polypeptide is Hemoglobin subunit beta (HBB) (Sturnus vulgaris (Starling)).